Here is a 415-residue protein sequence, read N- to C-terminus: MAPPVSDDSLQPRDVCVVGVARTPIGDFLGSLSSLTATRLGSIAIQAALKRAHVDPALVEEVFFGNVLTANLGQAPARQAALGAGIPYSVICTTINKVCAAGMKSVMLASQSIQLGLNDIVVAGGMESMSNVPKYLPDARRGSRLGHDTVVDGMMKDGLWDVYNDFGMGVCGEICADQYRITREEQDAYAIQSFERGIAAQNTQLFAWEIVPVEVSTGRGRPSVVIDKDEGLGKFDAAKLKKLRPSFKEDGGSVTAGNASSISDGAAALVLVSGEKALELGLHVIAKIRGYADAAQAPELFTTTPALAIPKAIKRAGLDASQVDYYEINEAFSVVALANQKLLGLDPERLNAHGGAVSLGHPLGCSGARILVTLLGVLRAKKGKYGVASICNGGGGASALVLEFMSEKTIGYSAL.

The Acyl-thioester intermediate role is filled by cysteine 99. Lysine 239 is a binding site for CoA. Alanine 256 contacts K(+). CoA is bound at residue serine 260. Residue valine 357 coordinates K(+). Catalysis depends on proton acceptor residues histidine 361 and cysteine 391.

Belongs to the thiolase-like superfamily. Thiolase family. Expressed in the vascular system of roots, cotyledons, young leaves, fully expanded leaves, stems, flowers, and funiculi of siliques.

It localises to the cytoplasm. Its subcellular location is the peroxisome. The enzyme catalyses 2 acetyl-CoA = acetoacetyl-CoA + CoA. The protein operates within metabolic intermediate biosynthesis; (R)-mevalonate biosynthesis; (R)-mevalonate from acetyl-CoA: step 1/3. Catalyzes the condensation of two molecules of acetyl-CoA to produce acetoacetyl-CoA. In Arabidopsis thaliana (Mouse-ear cress), this protein is Acetyl-CoA acetyltransferase 1.